The chain runs to 338 residues: Lipoate-protein ligase A (338 aa).

In terms of domain architecture, BPL/LPL catalytic spans 29–216; it reads PATQRVLFLW…AFFSHYGERV (188 aa). ATP contacts are provided by residues Arg-71, 76–79, and Lys-134; that span reads GAVF. Lys-134 contributes to the (R)-lipoate binding site.

Belongs to the LplA family. In terms of assembly, monomer.

The protein resides in the cytoplasm. The enzyme catalyses L-lysyl-[lipoyl-carrier protein] + (R)-lipoate + ATP = N(6)-[(R)-lipoyl]-L-lysyl-[lipoyl-carrier protein] + AMP + diphosphate + H(+). It participates in protein modification; protein lipoylation via exogenous pathway; protein N(6)-(lipoyl)lysine from lipoate: step 1/2. It functions in the pathway protein modification; protein lipoylation via exogenous pathway; protein N(6)-(lipoyl)lysine from lipoate: step 2/2. Catalyzes both the ATP-dependent activation of exogenously supplied lipoate to lipoyl-AMP and the transfer of the activated lipoyl onto the lipoyl domains of lipoate-dependent enzymes. The chain is Lipoate-protein ligase A from Klebsiella pneumoniae (strain 342).